The primary structure comprises 137 residues: Cytochrome c2 (137 aa).

The signal sequence occupies residues 1-21 (MKISLTAATVAALVLAAPAFA). The heme c site is built by Cys-34, Cys-37, His-38, and Met-117.

It belongs to the cytochrome c family. In terms of processing, binds 1 heme c group covalently per subunit.

Cytochrome c2 is found mainly in purple, non-sulfur, photosynthetic bacteria where it functions as the electron donor to the oxidized bacteriochlorophyll in the photophosphorylation pathway. However, it may also have a role in the respiratory chain and is found in some non-photosynthetic bacteria. This is Cytochrome c2 (cycA) from Rhodobacter capsulatus (strain ATCC BAA-309 / NBRC 16581 / SB1003).